We begin with the raw amino-acid sequence, 230 residues long: Porin OmpL (230 aa).

The N-terminal stretch at 1–20 is a signal peptide; sequence MKSLNTLVILTSVISTSVFA.

Belongs to the oligogalacturonate-specific porin KdgM (TC 1.B.35) family. OmpL subfamily.

It is found in the cell outer membrane. In terms of biological role, outer membrane channel protein that allows an efficient diffusion of low-molecular-weight solutes such as small sugars and tetraglycine. However, the specific substrate recognized by the OmpL channel is unknown. This is Porin OmpL (ompL) from Salmonella paratyphi A (strain ATCC 9150 / SARB42).